A 347-amino-acid chain; its full sequence is S-adenosylmethionine:tRNA ribosyltransferase-isomerase (347 aa).

The protein belongs to the QueA family. In terms of assembly, monomer.

The protein resides in the cytoplasm. The catalysed reaction is 7-aminomethyl-7-carbaguanosine(34) in tRNA + S-adenosyl-L-methionine = epoxyqueuosine(34) in tRNA + adenine + L-methionine + 2 H(+). It functions in the pathway tRNA modification; tRNA-queuosine biosynthesis. Transfers and isomerizes the ribose moiety from AdoMet to the 7-aminomethyl group of 7-deazaguanine (preQ1-tRNA) to give epoxyqueuosine (oQ-tRNA). The protein is S-adenosylmethionine:tRNA ribosyltransferase-isomerase of Pseudomonas paraeruginosa (strain DSM 24068 / PA7) (Pseudomonas aeruginosa (strain PA7)).